A 213-amino-acid chain; its full sequence is Outer-membrane lipoprotein carrier protein (213 aa).

A signal peptide spans 1-23 (MKKLLKQSLLGFALVSMTGAAFA).

The protein belongs to the LolA family. In terms of assembly, monomer.

The protein localises to the periplasm. In terms of biological role, participates in the translocation of lipoproteins from the inner membrane to the outer membrane. Only forms a complex with a lipoprotein if the residue after the N-terminal Cys is not an aspartate (The Asp acts as a targeting signal to indicate that the lipoprotein should stay in the inner membrane). This Actinobacillus pleuropneumoniae serotype 7 (strain AP76) protein is Outer-membrane lipoprotein carrier protein.